The chain runs to 1827 residues: Laminin subunit beta-4 (1827 aa).

Positions 1 to 21 (MLLRLELSALLLLLIAAPVRL) are cleaved as a signal peptide. Positions 26–266 (VGNSCYPNLG…ALYEMVVRGS (241 aa)) constitute a Laminin N-terminal domain. Residue N231 is glycosylated (N-linked (GlcNAc...) asparagine). Intrachain disulfides connect C267-C276, C269-C297, C299-C308, C311-C331, C334-C343, C336-C361, C364-C373, C376-C394, C397-C410, C399-C417, C419-C428, C431-C446, C449-C463, C451-C470, C472-C481, C484-C498, C501-C513, C503-C520, and C522-C531. Laminin EGF-like domains follow at residues 267-333 (CFCN…VCKR), 334-396 (CNCH…ACIP), 397-448 (CDCD…GCQL), and 449-500 (CRCN…GCIP). A Laminin EGF-like 5; truncated domain is found at 501-544 (CDCDIGGALKTECSSVDGQCKCRPNMVGQKCNDPAPGYFLAPLD). The Laminin IV type B domain occupies 540–847 (LAPLDFYIYE…LIGSMSAFIH (308 aa)). Cystine bridges form between C853-C865, C855-C872, C874-C883, C886-C898, C901-C913, C903-C920, C922-C931, C934-C944, C947-C956, C949-C963, C966-C975, C978-C992, C995-C1011, C997-C1022, C1024-C1033, C1036-C1051, C1054-C1068, C1056-C1075, C1078-C1087, C1090-C1103, C1106-C1126, C1108-C1133, C1135-C1144, C1147-C1160, C1163-C1175, C1165-C1182, C1184-C1193, C1196-C1208, C1211-C1223, C1213-C1230, C1232-C1241, and C1244-C1255. Laminin EGF-like domains lie at 853–900 (CNCH…GCSP), 901–946 (CDCD…LCRR), 947–994 (CQCN…PCEP), 995–1053 (CLCP…RCKE), 1054–1105 (CCCN…DCKE), 1106–1162 (CSCD…GCQP), 1163–1210 (CNCN…QCMF), and 1211–1257 (CDCN…ACEP). Residue N1001 is glycosylated (N-linked (GlcNAc...) asparagine). The domain II stretch occupies residues 1258-1449 (CHACNHLWEK…LSAANINEEV (192 aa)). Coiled-coil stretches lie at residues 1294-1335 (ELQH…EIID) and 1385-1449 (NKIK…NEEV). N1329 carries N-linked (GlcNAc...) asparagine glycosylation. Positions 1450–1476 (CGAPGDAECEKAKCGGALCGKCGGPDC) are domain alpha. Positions 1477 to 1827 (TGSLPISLNA…KVQRYNLCSP (351 aa)) are domain I. N-linked (GlcNAc...) asparagine glycans are attached at residues N1485, N1496, N1513, N1533, N1599, N1629, N1644, N1672, N1686, N1702, N1726, N1745, N1750, and N1761. Coiled-coil stretches lie at residues 1485–1554 (NASK…EKVK) and 1584–1820 (DEIK…DKVQ).

Laminin is a complex glycoprotein, consisting of three different polypeptide chains (alpha, beta, gamma), which are bound to each other by disulfide bonds into a cross-shaped molecule comprising one long and three short arms with globules at each end.

It is found in the secreted. It localises to the extracellular space. Its subcellular location is the extracellular matrix. The protein localises to the basement membrane. In terms of biological role, binding to cells via a high affinity receptor, laminin is thought to mediate the attachment, migration and organization of cells into tissues during embryonic development by interacting with other extracellular matrix components. Positively regulates apical-basal distribution of Muller glia cells in the retina. The chain is Laminin subunit beta-4 (lamb4) from Danio rerio (Zebrafish).